We begin with the raw amino-acid sequence, 395 residues long: Chorismate synthase (395 aa).

The protein belongs to the chorismate synthase family. In terms of assembly, homotetramer. FMNH2 serves as cofactor.

It catalyses the reaction 5-O-(1-carboxyvinyl)-3-phosphoshikimate = chorismate + phosphate. It participates in metabolic intermediate biosynthesis; chorismate biosynthesis; chorismate from D-erythrose 4-phosphate and phosphoenolpyruvate: step 7/7. The sequence is that of Chorismate synthase from Schizosaccharomyces pombe (strain 972 / ATCC 24843) (Fission yeast).